Here is a 986-residue protein sequence, read N- to C-terminus: Leucine-rich repeat receptor-like kinase protein HAR1 (986 aa).

An N-terminal signal peptide occupies residues 1–25; it reads MRIRVSYLLVLCFTLIWFRWTVVYS. LRR repeat units lie at residues 71–97, 98–121, 123–145, 146–170, 171–196, 198–218, 243–267, 268–291, 293–314, 316–339, 340–363, 365–387, 388–411, 412–435, 437–458, 459–482, 483–506, 508–530, 531–554, 555–578, and 579–603; these read DQNL…IGLL, EKLE…LASL, SLKV…ITVG, MTEL…IVKL, EKLK…EFQS, EFLG…LAKL, MENL…LGNL, TKLH…LSSM, SLMS…SFSK, KNLT…IGDL, PNLE…LGGN, RFLY…LCKS, GRLK…IGEC, RSLT…VFQL, SVTI…VISG, ESLG…MKNL, RALQ…VFEI, MLTK…ITHR, ASLT…MKNL, MDLS…IRFM, and TSLT…QFLV. N-linked (GlcNAc...) asparagine glycosylation is found at Asn-80, Asn-102, Asn-109, Asn-128, and Asn-141. N-linked (GlcNAc...) asparagine glycosylation is found at Asn-255, Asn-266, and Asn-279. N-linked (GlcNAc...) asparagine glycosylation is found at Asn-317 and Asn-351. 2 N-linked (GlcNAc...) asparagine glycosylation sites follow: Asn-513 and Asn-518. 2 N-linked (GlcNAc...) asparagine glycosylation sites follow: Asn-561 and Asn-590. A helical membrane pass occupies residues 645 to 665; the sequence is IVIGIALATAVLLVAVTVHVV. Positions 695–971 constitute a Protein kinase domain; that stretch reads LKEENIIGKG…TMREVVHMLT (277 aa). Residues 701–709 and Lys-723 each bind ATP; that span reads IGKGGAGIV. The active-site Proton acceptor is Asp-820.

The protein belongs to the protein kinase superfamily. Ser/Thr protein kinase family. As to expression, expressed in roots, leaves, stems and flowers.

The protein resides in the cell membrane. The enzyme catalyses L-seryl-[protein] + ATP = O-phospho-L-seryl-[protein] + ADP + H(+). The catalysed reaction is L-threonyl-[protein] + ATP = O-phospho-L-threonyl-[protein] + ADP + H(+). Its function is as follows. LRR receptor kinase involved in the regulation of root and shoot growth, and root nodule organogenesis. Involved in long distance nodulation signaling events. Involved in the autoregulation of nodulation (AON), a long distance systemic signaling from root to shoot and back again, which allows legumes to limit the number of root nodules formed based on available nitrogen and previous rhizobial colonization. Acts from shoot to root to control AON. Involved in the regulation of root colonization by arbuscular mycorrhizal (AM) fungi. The chain is Leucine-rich repeat receptor-like kinase protein HAR1 from Lotus japonicus (Lotus corniculatus var. japonicus).